The chain runs to 272 residues: uncharacterized protein (272 aa).

6 helical membrane passes run 20–37, 57–77, 97–119, 155–177, 184–203, and 234–256; these read VYLS…NLLI, HPLT…HFSL, LNVS…IMLM, SIAT…YVIF, LVSL…VTLG, and PYSI…WLVI.

The protein resides in the cell membrane. This is an uncharacterized protein from Halalkalibacterium halodurans (strain ATCC BAA-125 / DSM 18197 / FERM 7344 / JCM 9153 / C-125) (Bacillus halodurans).